The following is a 354-amino-acid chain: Adenine deaminase (354 aa).

Positions 19, 21, and 211 each coordinate Zn(2+). Residue Glu214 is the Proton donor of the active site. Zn(2+) is bound at residue Asp291. Asp292 provides a ligand contact to substrate.

The protein belongs to the metallo-dependent hydrolases superfamily. Adenosine and AMP deaminases family. Adenine deaminase type 2 subfamily. Requires Zn(2+) as cofactor.

The protein localises to the cytoplasm. It localises to the nucleus. It catalyses the reaction adenine + H2O + H(+) = hypoxanthine + NH4(+). In terms of biological role, catalyzes the hydrolytic deamination of adenine to hypoxanthine. Plays an important role in the purine salvage pathway and in nitrogen catabolism. This is Adenine deaminase (aah1) from Aspergillus fumigatus (strain ATCC MYA-4609 / CBS 101355 / FGSC A1100 / Af293) (Neosartorya fumigata).